The primary structure comprises 245 residues: DNA polymerase sliding clamp 2 (245 aa).

It belongs to the PCNA family. Forms homodimers with PCNA1, which then recruit PCNA3; does not form homotrimers. The heterodimers interact with RfcS homotetramers. Heterotrimer which circularizes head-to-tail (head is at N-terminus, tail is at C-terminus) to form a toroid; DNA passes through its center. Replication factor C (RFC) is required to load the toroid on the DNA. This subunit interacts with DNA polymerase I (dpo1). The heterotrimer also interacts with flap endonuclease 1, DNA ligase and XPF via the other subunits.

In terms of biological role, one of the sliding clamp subunits that acts as a moving platform for DNA processing. Responsible for tethering the catalytic subunit of DNA polymerase to DNA during high-speed replication. Heterotrimer stimulates the Holliday junction resolvase Hjc. DNA polymerase I, DNA ligase and the flap endonuclease may be constitutively associated with the PCNA heterotrimer forming a scanning complex able to couple DNA synthesis and Okazaki fragment maturation. The sequence is that of DNA polymerase sliding clamp 2 from Saccharolobus solfataricus (strain ATCC 35092 / DSM 1617 / JCM 11322 / P2) (Sulfolobus solfataricus).